A 288-amino-acid polypeptide reads, in one-letter code: UDP-3-O-acyl-N-acetylglucosamine deacetylase (288 aa).

The Zn(2+) site is built by histidine 79, histidine 236, and aspartate 240. Residue histidine 263 is the Proton donor of the active site.

It belongs to the LpxC family. Zn(2+) is required as a cofactor.

The catalysed reaction is a UDP-3-O-[(3R)-3-hydroxyacyl]-N-acetyl-alpha-D-glucosamine + H2O = a UDP-3-O-[(3R)-3-hydroxyacyl]-alpha-D-glucosamine + acetate. Its pathway is glycolipid biosynthesis; lipid IV(A) biosynthesis; lipid IV(A) from (3R)-3-hydroxytetradecanoyl-[acyl-carrier-protein] and UDP-N-acetyl-alpha-D-glucosamine: step 2/6. Catalyzes the hydrolysis of UDP-3-O-myristoyl-N-acetylglucosamine to form UDP-3-O-myristoylglucosamine and acetate, the committed step in lipid A biosynthesis. This is UDP-3-O-acyl-N-acetylglucosamine deacetylase from Rickettsia prowazekii (strain Madrid E).